The primary structure comprises 118 residues: Putative membrane protein insertion efficiency factor (118 aa).

Belongs to the UPF0161 family.

It is found in the cell inner membrane. In terms of biological role, could be involved in insertion of integral membrane proteins into the membrane. The chain is Putative membrane protein insertion efficiency factor from Helicobacter pylori (strain HPAG1).